The sequence spans 730 residues: uncharacterized protein (730 aa).

A phosphoserine mark is found at serine 82 and serine 89. Disordered stretches follow at residues 82–114 (SPVRRHNSIQPSNSGKNSTEKTSTKGSRTTGSY) and 447–468 (NTNHNFTTNNNNENESNDSKNE). The span at 89-98 (SIQPSNSGKN) shows a compositional bias: polar residues. A compositionally biased stretch (low complexity) spans 449–460 (NHNFTTNNNNEN). Phosphoserine is present on residues serine 483 and serine 651.

This is an uncharacterized protein from Saccharomyces cerevisiae (strain ATCC 204508 / S288c) (Baker's yeast).